The following is a 286-amino-acid chain: Deleted in azoospermia-like-A (286 aa).

An RRM domain is found at 33 to 114; that stretch reads NTVFVGGIDI…PAIRKICTYV (82 aa). A DAZ domain is found at 155–180; that stretch reads ACPYPSSPPMAIQQIPVGCQQPGYFQ.

It belongs to the RRM DAZ family. Interacts with the C-terminus of pabp1 and with epabp. Prior to oocyte maturation, found in a complex with epabp and pum2 proteins and spdy1 mRNA; pum2 dissociates from the complex during maturation. In terms of tissue distribution, germ-line specific. Oocyte mRNA expression is first restricted to the granulo-fibrillar material (GFM) of the mitochondrial cloud and then to the oocyte germ plasm at the vegetal cortex. Remains an mRNA component of the germ plasm until the neurula stage. In 2-8 cell embryos, expressed in the germ plasm matrix between germinal granules and mitochondria. Expressed in primordial germ cells (PGCs) later in embryogenesis. In addition to the ovaries of adult females, expressed in the testis of adult and juvenile males in spermatogonia and spermatocytes. The protein is restricted to the embryonic germ plasm and primordial germ cells.

The protein resides in the cytoplasm. Its function is as follows. RNA-binding protein that is required for primordial germ cell (PGC) differentiation and indirectly necessary for the migration of PGCs through the endoderm. May promote meiotic cell division during spermatogenesis. Shows a preference for G- and U-rich RNAs and probably binds the 3'-UTR of target mRNAs. Stimulates the initiation of translation of mRNAs through the recruitment of poly(A)-binding proteins (PABPs). The protein is Deleted in azoospermia-like-A (dazl-a) of Xenopus laevis (African clawed frog).